The primary structure comprises 543 residues: Cysteine/serine-rich nuclear protein 2 (543 aa).

Met1 carries the post-translational modification N-acetylmethionine. Disordered stretches follow at residues 1-51 (MDAF…SFTP), 281-305 (KRQV…LTGA), and 488-543 (DCNP…PLAV). Positions 31 to 40 (SSDSADSCDS) are enriched in low complexity. 2 stretches are compositionally biased toward polar residues: residues 42-51 (NPPTTASFTP) and 296-305 (PTASCSLTGA).

This sequence belongs to the AXUD1 family.

It is found in the nucleus. Functionally, binds to the consensus sequence 5'-AGAGTG-3' and has transcriptional activator activity. May play a role in apoptosis. This chain is Cysteine/serine-rich nuclear protein 2 (CSRNP2), found in Homo sapiens (Human).